A 275-amino-acid chain; its full sequence is Phosphonoacetaldehyde hydrolase (275 aa).

Aspartate 15 functions as the Nucleophile in the catalytic mechanism. Positions 15 and 17 each coordinate Mg(2+). The active-site Schiff-base intermediate with substrate is lysine 56. Aspartate 189 is a Mg(2+) binding site.

Belongs to the HAD-like hydrolase superfamily. PhnX family. In terms of assembly, homodimer. Requires Mg(2+) as cofactor.

The enzyme catalyses phosphonoacetaldehyde + H2O = acetaldehyde + phosphate + H(+). Functionally, involved in phosphonate degradation. The polypeptide is Phosphonoacetaldehyde hydrolase (Pseudomonas paraeruginosa (strain DSM 24068 / PA7) (Pseudomonas aeruginosa (strain PA7))).